Reading from the N-terminus, the 391-residue chain is 3-ketoacyl-CoA thiolase (391 aa).

The Acyl-thioester intermediate role is filled by C95. Catalysis depends on proton acceptor residues H347 and C377.

This sequence belongs to the thiolase-like superfamily. Thiolase family. In terms of assembly, heterotetramer of two alpha chains (FadB) and two beta chains (FadA).

The protein resides in the cytoplasm. It carries out the reaction an acyl-CoA + acetyl-CoA = a 3-oxoacyl-CoA + CoA. The protein operates within lipid metabolism; fatty acid beta-oxidation. Its function is as follows. Catalyzes the final step of fatty acid oxidation in which acetyl-CoA is released and the CoA ester of a fatty acid two carbons shorter is formed. This chain is 3-ketoacyl-CoA thiolase, found in Hahella chejuensis (strain KCTC 2396).